Here is a 357-residue protein sequence, read N- to C-terminus: Sulfate/thiosulfate import ATP-binding protein CysA (357 aa).

Positions 3–237 constitute an ABC transporter domain; it reads IQIQGVSKQY…PASPFVYDFL (235 aa). Position 35-42 (35-42) interacts with ATP; the sequence is GPSGSGKT.

The protein belongs to the ABC transporter superfamily. Sulfate/tungstate importer (TC 3.A.1.6) family. The complex is composed of two ATP-binding proteins (CysA), two transmembrane proteins (CysT and CysW) and a solute-binding protein (CysP).

Its subcellular location is the cell membrane. It carries out the reaction sulfate(out) + ATP + H2O = sulfate(in) + ADP + phosphate + H(+). The catalysed reaction is thiosulfate(out) + ATP + H2O = thiosulfate(in) + ADP + phosphate + H(+). Its function is as follows. Part of the ABC transporter complex CysAWTP involved in sulfate/thiosulfate import. Responsible for energy coupling to the transport system. This is Sulfate/thiosulfate import ATP-binding protein CysA from Bacillus cereus (strain ATCC 14579 / DSM 31 / CCUG 7414 / JCM 2152 / NBRC 15305 / NCIMB 9373 / NCTC 2599 / NRRL B-3711).